The primary structure comprises 297 residues: Palmitoyl-protein thioesterase ABHD10, mitochondrial (297 aa).

A mitochondrion-targeting transit peptide spans 1–43 (MAAWVPCRKWGWAAVSFGRHRGLIASLARKPPWAWWLSACRQK). Residues 69-181 (IIFIPGYLSN…GVVTQFHSLP (113 aa)) enclose the AB hydrolase-1 domain. Residues Ser143, Asp240, and His270 each act as charge relay system in the active site.

It belongs to the AB hydrolase superfamily. As to expression, expressed in epididymal sperm but not in testicular sperm (at protein level).

It localises to the mitochondrion. The enzyme catalyses S-hexadecanoyl-L-cysteinyl-[protein] + H2O = L-cysteinyl-[protein] + hexadecanoate + H(+). The catalysed reaction is mycophenolic acid O-acyl-beta-D-glucuronide + H2O = mycophenolate + D-glucuronate + H(+). Inhibited by palmostatin-B. Its function is as follows. Acts as an acyl-protein thioesterase that hydrolyzes fatty acids from acylated residues in proteins. Regulates the mitochondrial S-depalmitoylation of the nucleophilic active site residue of peroxiredoxin-5/PRDX5, a key antioxidant protein, therefore modulating mitochondrial antioxidant ability. Also catalyzes the deglucuronidation of mycophenolic acid acyl-glucuronide, an active metabolite of the immunosuppressant drug mycophenolate. This chain is Palmitoyl-protein thioesterase ABHD10, mitochondrial, found in Rattus norvegicus (Rat).